Consider the following 316-residue polypeptide: L-lactate dehydrogenase (316 aa).

Residues V15, D36, R41, Y66, and 80–81 contribute to the NAD(+) site; that span reads GA. Residues Q83, R90, and 122–125 contribute to the substrate site; that span reads NPVD. NAD(+)-binding positions include 120-122 and T145; that span reads ATN. 150–153 is a substrate binding site; the sequence is DTAR. The beta-D-fructose 1,6-bisphosphate site is built by R155 and H170. The active-site Proton acceptor is H177. Y222 is modified (phosphotyrosine). Position 231 (T231) interacts with substrate. The disordered stretch occupies residues 287-316; sequence DPGLSDEEREALRDSARALRDSRADLTVGT. A compositionally biased stretch (basic and acidic residues) spans 296-310; that stretch reads EALRDSARALRDSRA.

Belongs to the LDH/MDH superfamily. LDH family. As to quaternary structure, homotetramer.

Its subcellular location is the cytoplasm. The enzyme catalyses (S)-lactate + NAD(+) = pyruvate + NADH + H(+). It functions in the pathway fermentation; pyruvate fermentation to lactate; (S)-lactate from pyruvate: step 1/1. Allosterically activated by fructose 1,6-bisphosphate (FBP). Catalyzes the conversion of lactate to pyruvate. The polypeptide is L-lactate dehydrogenase (Salinibacter ruber (strain DSM 13855 / M31)).